The primary structure comprises 895 residues: Putative endoplasmic reticulum metallopeptidase 1-A (895 aa).

A disordered region spans residues 1–30 (MLRRRGGPNELRDELNNSKNQPEDDQRTKR). Residues 1 to 34 (MLRRRGGPNELRDELNNSKNQPEDDQRTKRGRES) lie on the Cytoplasmic side of the membrane. The segment covering 10–30 (ELRDELNNSKNQPEDDQRTKR) has biased composition (basic and acidic residues). Residues 35-55 (IGFRHWIYFVLTVAIVYAGVV) traverse the membrane as a helical segment. Residues 56–383 (ALHRKMPAVR…VVGLFTVYYS (328 aa)) lie on the Lumenal side of the membrane. Residues His-174 and Asp-186 each coordinate Zn(2+). Residue Glu-220 is the Proton acceptor of the active site. Zn(2+) contacts are provided by Glu-221, Glu-247, and His-323. The helical transmembrane segment at 384–404 (VNVGKLLNYIACFATYFLVVL) threads the bilayer. Over 405–423 (RIRNRLYSVGDLAIAFKHH) the chain is Cytoplasmic. The chain crosses the membrane as a helical span at residues 424 to 444 (VVAFLAMVITMLLIIAFVVQM). Residues 445–452 (DLVMCWYK) lie on the Lumenal side of the membrane. The chain crosses the membrane as a helical span at residues 453 to 473 (MPEIVGALYVLPMLIAGAIVH). Residues 474–492 (SHYADNNRIRNVEMVQYDT) lie on the Cytoplasmic side of the membrane. A helical transmembrane segment spans residues 493 to 513 (ILLSFASILFLMTFYNLSSAF). The Lumenal segment spans residues 514–517 (YVLN). Residues 518 to 538 (NLILPVFKDIIIWALGLFGVI) form a helical membrane-spanning segment. Topologically, residues 539 to 544 (RRVTPR) are cytoplasmic. The chain crosses the membrane as a helical span at residues 545–565 (VLFFTQLFCFLPTFVFAAYAI). Topologically, residues 566–586 (SQCVDFFVPVMGRLGNAINPE) are lumenal. A helical membrane pass occupies residues 587-607 (FIMGPLGLVIASGFILFVNNL). At 608–613 (FYISRR) the chain is on the cytoplasmic side. Residues 614 to 634 (MNYIIRLLFAIFALFILVLIT) traverse the membrane as a helical segment. Topologically, residues 635 to 895 (TKVGNPYEYS…GRSEIVVKIF (261 aa)) are lumenal. Residues Asn-659, Asn-702, and Asn-758 are each glycosylated (N-linked (GlcNAc...) asparagine).

This sequence belongs to the peptidase M28 family. Zn(2+) is required as a cofactor.

It is found in the endoplasmic reticulum membrane. The chain is Putative endoplasmic reticulum metallopeptidase 1-A from Caenorhabditis elegans.